We begin with the raw amino-acid sequence, 469 residues long: Adenosylhomocysteinase (469 aa).

Thr-58, Asp-133, and Glu-195 together coordinate substrate. 196-198 contributes to the NAD(+) binding site; sequence TTT. Residues Lys-225 and Asp-229 each coordinate substrate. Residues Asn-230, 259–264, Glu-282, Asn-317, 338–340, and Asn-383 contribute to the NAD(+) site; these read GFGDVG and IGH.

This sequence belongs to the adenosylhomocysteinase family. NAD(+) is required as a cofactor.

The protein resides in the cytoplasm. It catalyses the reaction S-adenosyl-L-homocysteine + H2O = L-homocysteine + adenosine. It functions in the pathway amino-acid biosynthesis; L-homocysteine biosynthesis; L-homocysteine from S-adenosyl-L-homocysteine: step 1/1. In terms of biological role, may play a key role in the regulation of the intracellular concentration of adenosylhomocysteine. This is Adenosylhomocysteinase from Rhodopseudomonas palustris (strain ATCC BAA-98 / CGA009).